Here is a 176-residue protein sequence, read N- to C-terminus: Mitochondrial inner membrane protein Mpv17 (176 aa).

Helical transmembrane passes span 18 to 38, 53 to 73, 94 to 114, and 131 to 151; these read VQVL…QQLV, TMVS…YKVL, GGFA…LNGM, and LITN…LVPL.

It belongs to the peroxisomal membrane protein PXMP2/4 family. As to expression, high levels in heart, kidney, and brain, intermediate levels in testis, and low levels in liver and spleen.

It localises to the mitochondrion inner membrane. In terms of biological role, non-selective channel that modulates the membrane potential under normal conditions and oxidative stress, and is involved in mitochondrial homeostasis. Involved in mitochondrial deoxynucleoside triphosphates (dNTP) pool homeostasis and mitochondrial DNA (mtDNA) maintenance. May be involved in the regulation of reactive oxygen species metabolism and the control of oxidative phosphorylation. The chain is Mitochondrial inner membrane protein Mpv17 from Mus musculus (Mouse).